Consider the following 284-residue polypeptide: Formyltetrahydrofolate deformylase (284 aa).

The region spanning 7–90 (TLLVSCPDQP…QIHFSDQLPR (84 aa)) is the ACT domain. The active site involves D228.

Belongs to the PurU family.

It catalyses the reaction (6R)-10-formyltetrahydrofolate + H2O = (6S)-5,6,7,8-tetrahydrofolate + formate + H(+). It functions in the pathway purine metabolism; IMP biosynthesis via de novo pathway; formate from 10-formyl-5,6,7,8-tetrahydrofolate: step 1/1. In terms of biological role, catalyzes the hydrolysis of 10-formyltetrahydrofolate (formyl-FH4) to formate and tetrahydrofolate (FH4). The protein is Formyltetrahydrofolate deformylase of Synechocystis sp. (strain ATCC 27184 / PCC 6803 / Kazusa).